We begin with the raw amino-acid sequence, 393 residues long: Putative cytochrome P450 143 (393 aa).

A heme-binding site is contributed by Cys342.

This sequence belongs to the cytochrome P450 family. Heme is required as a cofactor.

This chain is Putative cytochrome P450 143 (cyp143), found in Mycobacterium bovis (strain ATCC BAA-935 / AF2122/97).